The primary structure comprises 547 residues: MNRDEVAKTFAALKAHREASQETIADLFRVDPNRFENFHIKLDDVLFDYSKHRVTRTTLDLLFALARAAGVEDRRSQLFDGAAVNITEHRPALHMALRKLDGAPVLAEGKDVMPEVLAERQKIFTFAEAIRKGTIKAANGERFTDIVNIGIGGSDLGPRMVVTALAPFVADHLTMHFVSNVDGADLGDTLKKLPLATTLFIVCSKTFTTLETMTNAQTAREAVAEKLGEAAVADHFCAVSTQLDKIAAFGIKSDRVFGFWDWVGGRYSVWSAIGLSVVIAIGAEKFEKFLLGGQDIDQHFQTAPLESNVPVIMALLEIWYRDLWDYATRAVIPYDERMHRFSAYLQQLEMESNGKSVQLSGAPVTESTSPVVWGEPGTNGQHAFFQMLHQGTEIVPIDFLVAAQPSGADAKHHQLLVANCLAQSQALMQGRSLEDVKTLLTAQGLDTAAVNTLAPHKVFPGNRPSSTFLYKRLSPRVLGQLIALYEHKVFVEGVIWNVDSFDQWGVELGKELANKLTPIIRDSEASLEGLDGSTAGLIGEIRKHKKG.

Glutamate 351 functions as the Proton donor in the catalytic mechanism. Catalysis depends on residues histidine 382 and lysine 510.

Belongs to the GPI family.

It is found in the cytoplasm. It carries out the reaction alpha-D-glucose 6-phosphate = beta-D-fructose 6-phosphate. It functions in the pathway carbohydrate biosynthesis; gluconeogenesis. The protein operates within carbohydrate degradation; glycolysis; D-glyceraldehyde 3-phosphate and glycerone phosphate from D-glucose: step 2/4. Catalyzes the reversible isomerization of glucose-6-phosphate to fructose-6-phosphate. This chain is Glucose-6-phosphate isomerase, found in Beijerinckia indica subsp. indica (strain ATCC 9039 / DSM 1715 / NCIMB 8712).